The primary structure comprises 1755 residues: Deleted in lung and esophageal cancer protein 1 (1755 aa).

Residues 1 to 12 (METRSSKTRRSL) are compositionally biased toward basic residues. 3 disordered regions span residues 1–39 (METRSSKTRRSLASRTNECQGTMWAPTSPPAGSSSPSQP), 1339–1360 (PGPSSSSEFSHETDSSVEGSSS), and 1529–1553 (SQDGASQDHRAPGPGQKQECEEETA). The span at 30-39 (PAGSSSPSQP) shows a compositional bias: low complexity.

As to quaternary structure, interacts with alpha- and beta-tubulin. Interacts with BBS2, BBS4, BBS5, MKKS, TCP1, CCT2, CCT3, CCT4, CCT5 and CCT7. As to expression, expressed in all tissues examined. Expression is highest in prostate and testis.

It localises to the cytoplasm. Functionally, essential for spermatogenesis and male fertility. May play an important role in sperm head and tail formation. May act as a tumor suppressor by inhibiting cell proliferation. The chain is Deleted in lung and esophageal cancer protein 1 from Homo sapiens (Human).